The chain runs to 54 residues: Ferredoxin (54 aa).

2 consecutive 4Fe-4S ferredoxin-type domains span residues 2–28 (HVIS…EGET) and 29–54 (KYVV…ISAE). [4Fe-4S] cluster-binding residues include Cys-8, Cys-11, Cys-14, Cys-18, Cys-36, Cys-39, Cys-42, and Cys-46.

[4Fe-4S] cluster is required as a cofactor.

In terms of biological role, ferredoxins are iron-sulfur proteins that transfer electrons in a wide variety of metabolic reactions. In Megasphaera elsdenii, this protein is Ferredoxin.